The primary structure comprises 184 residues: Photosystem I assembly protein Ycf4 (184 aa).

A run of 2 helical transmembrane segments spans residues 19–39 (ISNF…VLVG) and 64–84 (LVMS…WCTI).

Belongs to the Ycf4 family.

The protein resides in the plastid. The protein localises to the chloroplast thylakoid membrane. In terms of biological role, seems to be required for the assembly of the photosystem I complex. The polypeptide is Photosystem I assembly protein Ycf4 (Oenothera elata subsp. hookeri (Hooker's evening primrose)).